Here is a 448-residue protein sequence, read N- to C-terminus: tRNA modification GTPase MnmE (448 aa).

The (6S)-5-formyl-5,6,7,8-tetrahydrofolate site is built by arginine 21, glutamate 80, and lysine 119. Residues 215-370 (GVKLAIVGRP…LSEEILKKVG (156 aa)) enclose the TrmE-type G domain. Residue asparagine 225 participates in K(+) binding. GTP contacts are provided by residues 225 to 230 (NVGKSS), 244 to 250 (TDIAGTT), and 269 to 272 (DTAG). Residue serine 229 coordinates Mg(2+). Positions 244, 246, and 249 each coordinate K(+). Residue threonine 250 coordinates Mg(2+). Position 448 (lysine 448) interacts with (6S)-5-formyl-5,6,7,8-tetrahydrofolate.

This sequence belongs to the TRAFAC class TrmE-Era-EngA-EngB-Septin-like GTPase superfamily. TrmE GTPase family. In terms of assembly, homodimer. Heterotetramer of two MnmE and two MnmG subunits. Requires K(+) as cofactor.

The protein resides in the cytoplasm. In terms of biological role, exhibits a very high intrinsic GTPase hydrolysis rate. Involved in the addition of a carboxymethylaminomethyl (cmnm) group at the wobble position (U34) of certain tRNAs, forming tRNA-cmnm(5)s(2)U34. This Aquifex aeolicus (strain VF5) protein is tRNA modification GTPase MnmE.